The chain runs to 444 residues: S-locus-specific glycoprotein (444 aa).

The N-terminal stretch at 1–28 (MRGVIPNYHHSYTLFFFVILVLFPHVFS) is a signal peptide. Residues 31-159 (TLSPNEALTI…KTNDLDRFMW (129 aa)) form the Bulb-type lectin domain. Asn43, Asn125, Asn243, and Asn396 each carry an N-linked (GlcNAc...) asparagine glycan. One can recognise a PAN domain in the interval 356–437 (CGEGDGFLRM…GGQDLYVKVA (82 aa)). Disulfide bonds link Cys387-Cys412 and Cys395-Cys397.

As to expression, stigma.

Functionally, involved in sporophytic self-incompatibility system (the inability of flowering plants to achieve self-fertilization). The polypeptide is S-locus-specific glycoprotein (SLSG) (Brassica oleracea var. alboglabra (Chinese kale)).